A 352-amino-acid polypeptide reads, in one-letter code: Spermidine/putrescine import ATP-binding protein PotA (352 aa).

One can recognise an ABC transporter domain in the interval 7-237 (IELKNVSKKY…PKNKFVANFI (231 aa)). ATP is bound at residue 39–46 (GPSGCGKT).

The protein belongs to the ABC transporter superfamily. Spermidine/putrescine importer (TC 3.A.1.11.1) family. As to quaternary structure, the complex is composed of two ATP-binding proteins (PotA), two transmembrane proteins (PotB and PotC) and a solute-binding protein (PotD).

It localises to the cell membrane. It catalyses the reaction ATP + H2O + polyamine-[polyamine-binding protein]Side 1 = ADP + phosphate + polyamineSide 2 + [polyamine-binding protein]Side 1.. In terms of biological role, part of the ABC transporter complex PotABCD involved in spermidine/putrescine import. Responsible for energy coupling to the transport system. The sequence is that of Spermidine/putrescine import ATP-binding protein PotA from Clostridium acetobutylicum (strain ATCC 824 / DSM 792 / JCM 1419 / IAM 19013 / LMG 5710 / NBRC 13948 / NRRL B-527 / VKM B-1787 / 2291 / W).